The chain runs to 427 residues: Peptidase B (427 aa).

Positions 195 and 200 each coordinate Mn(2+). Residue lysine 207 is part of the active site. Positions 218, 277, and 279 each coordinate Mn(2+). Arginine 281 is a catalytic residue.

The protein belongs to the peptidase M17 family. In terms of assembly, homohexamer. The cofactor is Mn(2+).

It localises to the cytoplasm. It catalyses the reaction Release of an N-terminal amino acid, Xaa, from a peptide or arylamide. Xaa is preferably Glu or Asp but may be other amino acids, including Leu, Met, His, Cys and Gln.. Probably plays an important role in intracellular peptide degradation. In Salmonella arizonae (strain ATCC BAA-731 / CDC346-86 / RSK2980), this protein is Peptidase B.